We begin with the raw amino-acid sequence, 510 residues long: NAD(P)H-quinone oxidoreductase subunit 2 B, chloroplastic (510 aa).

A run of 14 helical transmembrane segments spans residues 31–51 (FIFP…IDLT), 59–79 (WFYF…LFRW), 99–119 (IFQF…VEYI), 124–144 (MAIT…MFLC), 149–169 (LITI…LSGY), 184–204 (LLMG…LYGL), 229–249 (ISIA…LAPF), 261–281 (PTPV…ALAT), 295–315 (WHLL…LLAI), 323–343 (MLAY…IVGD), 354–374 (YMLF…LFGL), 395–415 (ALSL…AGFF), 418–438 (LYLF…IGLL), and 484–504 (MTVC…ILAI).

It belongs to the complex I subunit 2 family. In terms of assembly, NDH is composed of at least 16 different subunits, 5 of which are encoded in the nucleus.

The protein resides in the plastid. It is found in the chloroplast thylakoid membrane. The catalysed reaction is a plastoquinone + NADH + (n+1) H(+)(in) = a plastoquinol + NAD(+) + n H(+)(out). It catalyses the reaction a plastoquinone + NADPH + (n+1) H(+)(in) = a plastoquinol + NADP(+) + n H(+)(out). NDH shuttles electrons from NAD(P)H:plastoquinone, via FMN and iron-sulfur (Fe-S) centers, to quinones in the photosynthetic chain and possibly in a chloroplast respiratory chain. The immediate electron acceptor for the enzyme in this species is believed to be plastoquinone. Couples the redox reaction to proton translocation, and thus conserves the redox energy in a proton gradient. The protein is NAD(P)H-quinone oxidoreductase subunit 2 B, chloroplastic of Hordeum vulgare (Barley).